The sequence spans 486 residues: Serine/threonine-protein kinase 32C (486 aa).

The disordered stretch occupies residues 1–56 (MRSGAERRGSSAAASPGSPPPGRARPAGSDAPSALPPPAAGQPRARDSGDVRSQPR). Serine 10, serine 15, and serine 18 each carry phosphoserine. Residues 24 to 33 (ARPAGSDAPS) are compositionally biased toward low complexity. A Protein kinase domain is found at 93–353 (FQILRAIGKG…LQDVQAAPAL (261 aa)). ATP-binding positions include 99–107 (IGKGSFGKV) and lysine 122. Catalysis depends on aspartate 216, which acts as the Proton acceptor. Residues 396–405 (HKKKKRLAKN) show a composition bias toward basic residues. 2 disordered regions span residues 396–419 (HKKK…QSEN) and 444–486 (SQDL…AGSG).

This sequence belongs to the protein kinase superfamily. Ser/Thr protein kinase family. Requires Mg(2+) as cofactor.

It catalyses the reaction L-seryl-[protein] + ATP = O-phospho-L-seryl-[protein] + ADP + H(+). The catalysed reaction is L-threonyl-[protein] + ATP = O-phospho-L-threonyl-[protein] + ADP + H(+). This Homo sapiens (Human) protein is Serine/threonine-protein kinase 32C.